We begin with the raw amino-acid sequence, 704 residues long: Pentatricopeptide repeat-containing protein At4g28010 (704 aa).

PPR repeat units lie at residues 71-105 (LAFA…DTFI), 106-140 (NFVS…GFAF), 141-175 (NVYN…SLMP), 176-210 (DVFS…GCSW), 211-245 (SLVT…GLEA), 246-280 (DLVV…GDSP), 281-315 (CAIT…GVRP), 316-350 (NVYT…DEEP), 351-385 (NAVT…RTRP), 386-416 (DNIT…MLKD), 423-453 (DVIS…LVEK), 458-492 (DRVT…KIVR), 493-527 (NSDT…ELQP), 528-562 (SVFD…NNFP), 563-597 (DVVS…GLSP), 598-632 (DLFT…GFEP), and 633-667 (DAHI…DIVL).

The protein belongs to the PPR family. P subfamily.

The polypeptide is Pentatricopeptide repeat-containing protein At4g28010 (Arabidopsis thaliana (Mouse-ear cress)).